We begin with the raw amino-acid sequence, 222 residues long: MPVIKKEELSQKKDLESEEEDSGLEDEYEVEKVIKHRGKGKNIEFLVRWKGYGPEYDTWEPTENVASAEEAVAAYWETQDKTATAPRKRGRQEAYTASQTSITPKPESSKQAAKKARTSTAENGIKASVDKGEGNDGASDDDIDRQYSGSLDKYSDLKSWENVVQNIETVEQGEGGQLIVYATMKGGEKVTIPTELAYKKCPLKCLYFYQKHLKWRPVDENE.

Over residues 1 to 15 (MPVIKKEELSQKKDL) the composition is skewed to basic and acidic residues. 2 disordered regions span residues 1 to 26 (MPVI…GLED) and 77 to 147 (ETQD…DRQY). Positions 16–26 (ESEEEDSGLED) are enriched in acidic residues. The 60-residue stretch at 28 to 87 (YEVEKVIKHRGKGKNIEFLVRWKGYGPEYDTWEPTENVASAEEAVAAYWETQDKTATAPR) folds into the Chromo domain.

Interacts with DMT5.

Its subcellular location is the nucleus. In terms of biological role, recognizes and binds histone H3 tails methylated at 'Lys-9', leading to epigenetic repression. Localizes DMT5 to heterochromatin characterized by trimethylation of histone H3 tails at 'Lys-9'. This is Chromatin-associated protein SWI6 from Cryptococcus neoformans var. grubii serotype A (strain H99 / ATCC 208821 / CBS 10515 / FGSC 9487) (Filobasidiella neoformans var. grubii).